The primary structure comprises 617 residues: Syncytin-A (617 aa).

The first 17 residues, 1–17 (MVRPWVFCLLLFPCSSA), serve as a signal peptide directing secretion. The Extracellular segment spans residues 18–544 (YSDSWMPLVN…WIQWLGLGPW (527 aa)). Asparagine 27 carries N-linked (GlcNAc...) asparagine glycosylation. Positions 44-47 (CWVC) match the CXXC motif. 3 disulfide bridges follow: cysteine 44/cysteine 47, cysteine 44/cysteine 505, and cysteine 497/cysteine 504. Residues asparagine 272 and asparagine 365 are each glycosylated (N-linked (GlcNAc...) asparagine). Positions 420–440 (LLPLLAGLGIASALGLGIAGI) are fusion peptide. Residues 497–505 (CLFLQEECC) carry the CX6CC motif. A helical transmembrane segment spans residues 545–565 (LPSWLTSLMAPILFILVLLVF). The Cytoplasmic segment spans residues 566–617 (RPCLLNCLTHSVSRRMSSFIHTTTEGHVDKILLLRESQYKRLPQEPPEEDAV).

It belongs to the gamma type-C retroviral envelope protein family. In terms of assembly, the mature protein consists of a trimer of SU-TM heterodimers. The SU-TM heterodimers are attached by a labile interchain disulfide bond. In terms of processing, synthesized as an inactive precursor that is heavily N-glycosylated and processed likely by furin in the Golgi to yield the mature SU and TM proteins. The cleavage site between SU and TM requires the minimal sequence [KR]-X-[KR]-R. The CXXC motif is highly conserved across a broad range of retroviral envelope proteins. It is thought to participate in the formation of a labile disulfide bond possibly with the CX6CC motif present in the transmembrane protein. Isomerization of the intersubunit disulfide bond to an SU intrachain disulfide bond is thought to occur upon receptor recognition in order to allow membrane fusion. Highly expressed in placenta where it localizes to syncytiotrophoblasts of the labyrinthine zona. Specifically localizes to syncytiotrophoblast layer I (SynT-I). Also detected at very low levels in hippocampus, brain, testis and ovary.

The protein resides in the cell membrane. Its function is as follows. This endogenous retroviral envelope protein has retained its original fusogenic properties. Together with Synb, participates in trophoblast fusion and the formation of a syncytium during placenta morphogenesis. Syna is essential for placental development and is specifically required for formation of syncytiotrophoblast layer I (SynT-I). Promotes muscle myoblast fusion. Does not have immunosuppressive activity. The sequence is that of Syncytin-A from Mus musculus (Mouse).